The primary structure comprises 121 residues: Centrocin 2 (121 aa).

An N-terminal signal peptide occupies residues 1–20 (MMIKIAVVLCAVMATSMVFA). A propeptide spanning residues 21–50 (NDVKEQELADLLDLLISEEVSSPDDAVAES) is cleaved from the precursor. W51 and W59 each carry 6'-bromotryptophan. C77 and C112 form a disulfide bridge. Residues 83-106 (SPQEARAKVLEAFPEMKESDLDEE) constitute a propeptide that is removed on maturation. Q107 bears the Pyrrolidone carboxylic acid mark. The residue at position 119 (H119) is a Histidine amide.

In terms of assembly, heterodimer of a light and a heavy chain, probably disulfide-linked.

Its function is as follows. Has antimicrobial activity against Gram-negative bacteria, Gram-positive bacteria and against fungi with minimum inhibitory concentration (MIC) between 0.78 uM and 50 uM. Shows little hemolytic activity at concentrations up to 12.5 uM but &gt;50% lysis at 100 uM. This chain is Centrocin 2, found in Echinus esculentus (Sea urchin).